The primary structure comprises 181 residues: Proteinase inhibitor B (181 aa).

An N-terminal signal peptide occupies residues Met1–Gly24. 3 cysteine pairs are disulfide-bonded: Cys67–Cys113, Cys134–Cys143, and Cys136–Cys139.

The protein belongs to the protease inhibitor I3 (leguminous Kunitz-type inhibitor) family.

The protein localises to the secreted. Its function is as follows. Possesses two reactive sites. Inhibits two molecules of trypsin simultaneously. Inhibits efficiently kallikrein, but chymotrypsin weakly. This Sagittaria sagittifolia (Arrowhead) protein is Proteinase inhibitor B.